A 179-amino-acid chain; its full sequence is NADH dehydrogenase [ubiquinone] 1 beta subcomplex subunit 9 (179 aa).

A2 carries the post-translational modification N-acetylalanine. A Phosphoserine modification is found at S85. The interval E136–D162 is disordered.

Belongs to the complex I LYR family. Mammalian complex I is composed of 45 different subunits.

The protein resides in the mitochondrion inner membrane. Its function is as follows. Accessory subunit of the mitochondrial membrane respiratory chain NADH dehydrogenase (Complex I), that is believed to be not involved in catalysis. Complex I functions in the transfer of electrons from NADH to the respiratory chain. The immediate electron acceptor for the enzyme is believed to be ubiquinone. This Pan troglodytes (Chimpanzee) protein is NADH dehydrogenase [ubiquinone] 1 beta subcomplex subunit 9 (NDUFB9).